A 772-amino-acid chain; its full sequence is Acetamidase regulatory protein (772 aa).

Positions 1–16 (MSSTAQKNSLSPTGNG) are enriched in polar residues. Residues 1–23 (MSSTAQKNSLSPTGNGVTKRKSG) form a disordered region. The segment at residues 26-59 (ACVHCHRRKVRCDARIVGLPCSNCRSSGKTDCRI) is a DNA-binding region (zn(2)-C6 fungal-type). 3 disordered regions span residues 78-99 (RCRP…TISE), 114-148 (AAAP…QECH), and 627-690 (ATSE…QTAV). The segment covering 114–123 (AAAPPASVAP) has biased composition (low complexity). Polar residues-rich tracts occupy residues 124–144 (NVQS…SPQA) and 634–658 (PFSS…QHSS). The segment covering 671-686 (LLPSYDSPTPDSTSLP) has biased composition (low complexity).

The protein resides in the nucleus. In terms of biological role, positively regulates the expression of genes involved in the catabolism of certain amides, omega amino acids, and lactams. In Aspergillus fumigatus (strain ATCC MYA-4609 / CBS 101355 / FGSC A1100 / Af293) (Neosartorya fumigata), this protein is Acetamidase regulatory protein (amdR).